A 123-amino-acid chain; its full sequence is Anti-lipopolysaccharide factor (123 aa).

Residues 1–26 (MRTRVMAGLCVALVVMCLYMPQPCEA) form the signal peptide. A disulfide bridge connects residues cysteine 55 and cysteine 76.

Strong expression in hemocytes, heart and muscle, with weaker expression detected in gills and hepatopancreas. No expression detected in eyes.

Its subcellular location is the secreted. In terms of biological role, binds to bacterial LPS and may specifically inhibit the LPS-mediated activation of the hemolymph coagulation. It has a strong antibacterial effect especially on the growth of Gram-negative bacteria. This chain is Anti-lipopolysaccharide factor, found in Scylla serrata (Mud crab).